The following is a 466-amino-acid chain: Uronate isomerase (466 aa).

This sequence belongs to the metallo-dependent hydrolases superfamily. Uronate isomerase family.

The catalysed reaction is D-glucuronate = D-fructuronate. The enzyme catalyses aldehydo-D-galacturonate = keto-D-tagaturonate. It participates in carbohydrate metabolism; pentose and glucuronate interconversion. The polypeptide is Uronate isomerase (Brucella suis (strain ATCC 23445 / NCTC 10510)).